The following is a 224-amino-acid chain: Enolase-phosphatase E1 (224 aa).

It belongs to the HAD-like hydrolase superfamily. MasA/MtnC family. As to quaternary structure, monomer. Mg(2+) is required as a cofactor.

The catalysed reaction is 5-methylsulfanyl-2,3-dioxopentyl phosphate + H2O = 1,2-dihydroxy-5-(methylsulfanyl)pent-1-en-3-one + phosphate. Its pathway is amino-acid biosynthesis; L-methionine biosynthesis via salvage pathway; L-methionine from S-methyl-5-thio-alpha-D-ribose 1-phosphate: step 3/6. The protein operates within amino-acid biosynthesis; L-methionine biosynthesis via salvage pathway; L-methionine from S-methyl-5-thio-alpha-D-ribose 1-phosphate: step 4/6. Its function is as follows. Bifunctional enzyme that catalyzes the enolization of 2,3-diketo-5-methylthiopentyl-1-phosphate (DK-MTP-1-P) into the intermediate 2-hydroxy-3-keto-5-methylthiopentenyl-1-phosphate (HK-MTPenyl-1-P), which is then dephosphorylated to form the acireductone 1,2-dihydroxy-3-keto-5-methylthiopentene (DHK-MTPene). The sequence is that of Enolase-phosphatase E1 from Thioalkalivibrio sulfidiphilus (strain HL-EbGR7).